A 239-amino-acid chain; its full sequence is 1-(5-phosphoribosyl)-5-[(5-phosphoribosylamino)methylideneamino] imidazole-4-carboxamide isomerase (239 aa).

The Proton acceptor role is filled by Asp9. Catalysis depends on Asp131, which acts as the Proton donor.

This sequence belongs to the HisA/HisF family.

The protein resides in the cytoplasm. The catalysed reaction is 1-(5-phospho-beta-D-ribosyl)-5-[(5-phospho-beta-D-ribosylamino)methylideneamino]imidazole-4-carboxamide = 5-[(5-phospho-1-deoxy-D-ribulos-1-ylimino)methylamino]-1-(5-phospho-beta-D-ribosyl)imidazole-4-carboxamide. It participates in amino-acid biosynthesis; L-histidine biosynthesis; L-histidine from 5-phospho-alpha-D-ribose 1-diphosphate: step 4/9. This Parabacteroides distasonis (strain ATCC 8503 / DSM 20701 / CIP 104284 / JCM 5825 / NCTC 11152) protein is 1-(5-phosphoribosyl)-5-[(5-phosphoribosylamino)methylideneamino] imidazole-4-carboxamide isomerase.